Reading from the N-terminus, the 303-residue chain is N-acetyl-D-glucosamine kinase (303 aa).

ATP is bound by residues 4 to 11 (GFDVGGTK) and 133 to 140 (GFGGGLIF). Residues His157, Cys177, Cys179, and Cys184 each contribute to the Zn(2+) site.

This sequence belongs to the ROK (NagC/XylR) family. NagK subfamily.

It catalyses the reaction N-acetyl-D-glucosamine + ATP = N-acetyl-D-glucosamine 6-phosphate + ADP + H(+). It functions in the pathway cell wall biogenesis; peptidoglycan recycling. Functionally, catalyzes the phosphorylation of N-acetyl-D-glucosamine (GlcNAc) derived from cell-wall degradation, yielding GlcNAc-6-P. The chain is N-acetyl-D-glucosamine kinase from Aliivibrio fischeri (strain ATCC 700601 / ES114) (Vibrio fischeri).